The following is a 433-amino-acid chain: Adenylosuccinate synthetase (433 aa).

Residues 11-17 (GDEGKGK) and 39-41 (GHT) contribute to the GTP site. The active-site Proton acceptor is the aspartate 12. Mg(2+) is bound by residues aspartate 12 and glycine 39. Residues 12-15 (DEGK), 37-40 (NAGH), threonine 134, arginine 148, asparagine 230, threonine 245, and arginine 309 contribute to the IMP site. The Proton donor role is filled by histidine 40. 305-311 (VTTGRKR) is a substrate binding site. GTP contacts are provided by residues arginine 311, 337 to 339 (KLD), and 419 to 421 (GTG).

This sequence belongs to the adenylosuccinate synthetase family. In terms of assembly, homodimer. It depends on Mg(2+) as a cofactor.

The protein resides in the cytoplasm. It carries out the reaction IMP + L-aspartate + GTP = N(6)-(1,2-dicarboxyethyl)-AMP + GDP + phosphate + 2 H(+). It participates in purine metabolism; AMP biosynthesis via de novo pathway; AMP from IMP: step 1/2. Functionally, plays an important role in the de novo pathway and in the salvage pathway of purine nucleotide biosynthesis. Catalyzes the first committed step in the biosynthesis of AMP from IMP. This is Adenylosuccinate synthetase from Saccharomyces cerevisiae (strain JAY291) (Baker's yeast).